The sequence spans 315 residues: Adenine deaminase (315 aa).

Positions 14, 16, and 194 each coordinate Zn(2+). The active-site Proton donor is glutamate 197. Zn(2+) is bound at residue aspartate 275. Residue aspartate 276 coordinates substrate.

The protein belongs to the metallo-dependent hydrolases superfamily. Adenosine and AMP deaminases family. Adenine deaminase type 2 subfamily. Zn(2+) is required as a cofactor.

It carries out the reaction adenine + H2O + H(+) = hypoxanthine + NH4(+). Its function is as follows. Catalyzes the hydrolytic deamination of adenine to hypoxanthine. Plays an important role in the purine salvage pathway and in nitrogen catabolism. In Pseudomonas putida (strain W619), this protein is Adenine deaminase.